A 442-amino-acid chain; its full sequence is uncharacterized protein (442 aa).

The next 7 membrane-spanning stretches (helical) occupy residues 209 to 229 (FNIWTHLSAFIVFFAVLAYFY), 247 to 267 (IFFLLSAMKCLGCSVIWHTFS), 284 to 304 (VGISALIAASIISVEYHAFVC), 308 to 328 (LRFIFIAFTGTLGLIGIYTPW), 342 to 362 (IFFFVGLACSGLIPMITMFYI), 374 to 394 (PVFKSIFSYIIGVLFYGLHIP), and 402 to 422 (FDIIGNSHQIWHIAIIVGVAF).

It is found in the membrane. This is an uncharacterized protein from Schizosaccharomyces pombe (strain 972 / ATCC 24843) (Fission yeast).